The primary structure comprises 338 residues: MSTLRLLLSDSYDPWFNLAVEECIFRQMPATQRVLFLWRNADTVVIGRAQNPWKECNTRRMEEDHVRLARRSSGGGAVFHDLGNTCFTFMAGKPEYDKTVSTAIVLAALNSLGVTAEASGRNDLVVKTDSGDRKVSGSAYRETMDRGFHHGTLLLNADLSRLANYLNPDQKKLQAKGITSVRGRVANLVELLPGITHQQVCEAIQEAFFSHYGERVDAEVISPDNTPDLPNFAETFARQSSWEWNFGQAPAFSHLLDERFRWGGVELHFDVEKGHITRAQAFTDSLNPAPLEALAARLVGCQYRAEVLQQQCEALVGDFPEQEAELKELSAWIAGAVR.

Positions 29 to 216 (PATQRVLFLW…AFFSHYGERV (188 aa)) constitute a BPL/LPL catalytic domain. ATP is bound by residues R71, 76-79 (GAVF), and K134. (R)-lipoate is bound at residue K134.

Belongs to the LplA family. Monomer.

Its subcellular location is the cytoplasm. The catalysed reaction is L-lysyl-[lipoyl-carrier protein] + (R)-lipoate + ATP = N(6)-[(R)-lipoyl]-L-lysyl-[lipoyl-carrier protein] + AMP + diphosphate + H(+). The protein operates within protein modification; protein lipoylation via exogenous pathway; protein N(6)-(lipoyl)lysine from lipoate: step 1/2. It participates in protein modification; protein lipoylation via exogenous pathway; protein N(6)-(lipoyl)lysine from lipoate: step 2/2. In terms of biological role, catalyzes both the ATP-dependent activation of exogenously supplied lipoate to lipoyl-AMP and the transfer of the activated lipoyl onto the lipoyl domains of lipoate-dependent enzymes. The chain is Lipoate-protein ligase A from Klebsiella pneumoniae subsp. pneumoniae (strain ATCC 700721 / MGH 78578).